Reading from the N-terminus, the 488-residue chain is 2,3-bisphosphoglycerate-independent phosphoglycerate mutase (488 aa).

S10 serves as the catalytic Phosphoserine intermediate. S10 lines the Mn(2+) pocket. Substrate is bound by residues H69, R99–D100, R135, R142, R215–R218, and K290. Positions 359, 363, 400, 401, and 430 each coordinate Mn(2+).

Belongs to the BPG-independent phosphoglycerate mutase family. In terms of assembly, monomer. Mn(2+) is required as a cofactor.

It localises to the cytoplasm. It carries out the reaction (2R)-2-phosphoglycerate = (2R)-3-phosphoglycerate. It functions in the pathway carbohydrate degradation; glycolysis; pyruvate from D-glyceraldehyde 3-phosphate: step 3/5. Its function is as follows. Catalyzes the interconversion of 2-phosphoglycerate and 3-phosphoglycerate. This is 2,3-bisphosphoglycerate-independent phosphoglycerate mutase from Prunus dulcis (Almond).